The chain runs to 220 residues: MLRAAFRGSAYIGVFARATESCVLVRPDLDDDFVDSIADELGVPAVQTTVGGSSTVGSLAAGNSSGLLVSNRIRERERDRIEAAGVTVGELPGAVNAAGNVVVANDDGAYVHSGLSDDAVAAVEETLDVSATRGQLAGVDTVGTAAVATTDGVLCHPKATDAELERIEETLGVYADVGTVNYGAPLVGSGLVAADDGYLVGDDTTGPEIGRIEDTLGYIE.

Belongs to the eIF-6 family.

Its function is as follows. Binds to the 50S ribosomal subunit and prevents its association with the 30S ribosomal subunit to form the 70S initiation complex. The protein is Translation initiation factor 6 of Halobacterium salinarum (strain ATCC 29341 / DSM 671 / R1).